An 83-amino-acid polypeptide reads, in one-letter code: Cytochrome b559 subunit alpha (83 aa).

Residues 21–35 form a helical membrane-spanning segment; that stretch reads VIHSITIPSLFVAGW. His23 provides a ligand contact to heme.

This sequence belongs to the PsbE/PsbF family. As to quaternary structure, heterodimer of an alpha subunit and a beta subunit. PSII is composed of 1 copy each of membrane proteins PsbA, PsbB, PsbC, PsbD, PsbE, PsbF, PsbH, PsbI, PsbJ, PsbK, PsbL, PsbM, PsbT, PsbX, PsbY, PsbZ, Psb30/Ycf12, at least 3 peripheral proteins of the oxygen-evolving complex and a large number of cofactors. It forms dimeric complexes. Heme b is required as a cofactor.

The protein localises to the plastid. It is found in the chloroplast thylakoid membrane. Its function is as follows. This b-type cytochrome is tightly associated with the reaction center of photosystem II (PSII). PSII is a light-driven water:plastoquinone oxidoreductase that uses light energy to abstract electrons from H(2)O, generating O(2) and a proton gradient subsequently used for ATP formation. It consists of a core antenna complex that captures photons, and an electron transfer chain that converts photonic excitation into a charge separation. The polypeptide is Cytochrome b559 subunit alpha (Nephroselmis olivacea (Green alga)).